Consider the following 460-residue polypeptide: Probable argininosuccinate lyase (460 aa).

S26, N114, and T159 together coordinate 2-(N(omega)-L-arginino)succinate. H160 (proton acceptor) is an active-site residue. Catalysis depends on S281, which acts as the Proton donor. N289, Y321, Q326, and K329 together coordinate 2-(N(omega)-L-arginino)succinate.

This sequence belongs to the lyase 1 family. Argininosuccinate lyase subfamily. In terms of assembly, homotetramer.

It catalyses the reaction 2-(N(omega)-L-arginino)succinate = fumarate + L-arginine. Its pathway is amino-acid biosynthesis; L-arginine biosynthesis; L-arginine from L-ornithine and carbamoyl phosphate: step 3/3. This is Probable argininosuccinate lyase (argx) from Schizosaccharomyces pombe (strain 972 / ATCC 24843) (Fission yeast).